We begin with the raw amino-acid sequence, 21 residues long: Putative sperm adenylate cyclase (21 aa).

The enzyme catalyses ATP = 3',5'-cyclic AMP + diphosphate. This chain is Putative sperm adenylate cyclase, found in Mus musculus (Mouse).